The chain runs to 63 residues: Large ribosomal subunit protein uL30 (63 aa).

It belongs to the universal ribosomal protein uL30 family. Part of the 50S ribosomal subunit.

This chain is Large ribosomal subunit protein uL30, found in Hahella chejuensis (strain KCTC 2396).